A 399-amino-acid polypeptide reads, in one-letter code: Cyclic dehypoxanthine futalosine synthase (399 aa).

The 233-residue stretch at 56-288 folds into the Radical SAM core domain; the sequence is ATYIIERNIN…IAIARVFLDN (233 aa). [4Fe-4S] cluster is bound by residues cysteine 70, cysteine 74, and cysteine 77.

This sequence belongs to the radical SAM superfamily. MqnC family. The cofactor is [4Fe-4S] cluster.

It catalyses the reaction dehypoxanthine futalosine + S-adenosyl-L-methionine = cyclic dehypoxanthinylfutalosinate + 5'-deoxyadenosine + L-methionine + H(+). It functions in the pathway quinol/quinone metabolism; menaquinone biosynthesis. In terms of biological role, radical SAM enzyme that catalyzes the cyclization of dehypoxanthine futalosine (DHFL) into cyclic dehypoxanthine futalosine (CDHFL), a step in the biosynthesis of menaquinone (MK, vitamin K2). This Streptomyces coelicolor (strain ATCC BAA-471 / A3(2) / M145) protein is Cyclic dehypoxanthine futalosine synthase.